The primary structure comprises 112 residues: UPF0342 protein STER_0693 (112 aa).

It belongs to the UPF0342 family.

The protein is UPF0342 protein STER_0693 of Streptococcus thermophilus (strain ATCC BAA-491 / LMD-9).